A 166-amino-acid polypeptide reads, in one-letter code: Large ribosomal subunit protein uL10 (166 aa).

It belongs to the universal ribosomal protein uL10 family. Part of the ribosomal stalk of the 50S ribosomal subunit. The N-terminus interacts with L11 and the large rRNA to form the base of the stalk. The C-terminus forms an elongated spine to which L12 dimers bind in a sequential fashion forming a multimeric L10(L12)X complex.

Forms part of the ribosomal stalk, playing a central role in the interaction of the ribosome with GTP-bound translation factors. The sequence is that of Large ribosomal subunit protein uL10 from Ureaplasma parvum serovar 3 (strain ATCC 27815 / 27 / NCTC 11736).